Reading from the N-terminus, the 542-residue chain is Thermosome subunit alpha (542 aa).

The protein belongs to the TCP-1 chaperonin family. Forms a Heterooligomeric complex of two stacked eight-membered rings.

Molecular chaperone; binds unfolded polypeptides in vitro, and has a weak ATPase activity. This chain is Thermosome subunit alpha (thsA), found in Methanothermobacter thermautotrophicus (strain ATCC 29096 / DSM 1053 / JCM 10044 / NBRC 100330 / Delta H) (Methanobacterium thermoautotrophicum).